The chain runs to 291 residues: MRSARVVAVCGPTASGKSEVADELSALLTEAEGVWVPTVVVDSMQVYREIPEITNQARSRPAELVGVVPVTREWTVAEHRRRARAAIEGSGAGAAVLDAGTGMYLNATVLDIPLAPKVPREIRALAQRAAAGAANPRREARRLELELYGAPERGSIWEGEPAYELALIYLRPERASLDEAIARRSSRIARRGLADARRLQDLLEAGARVNPSVLGSIGVRELLSHLRGEISLPEAEETISVRTRHLARRQMRWFDKLARTLSGRARLVVSPSPEDPALRKALHSMHDIIGA.

Position 11–18 (11–18 (GPTASGKS)) interacts with ATP. Residue 13–18 (TASGKS) coordinates substrate. An interaction with substrate tRNA region spans residues 42-45 (DSMQ).

The protein belongs to the IPP transferase family. Monomer. The cofactor is Mg(2+).

The enzyme catalyses adenosine(37) in tRNA + dimethylallyl diphosphate = N(6)-dimethylallyladenosine(37) in tRNA + diphosphate. In terms of biological role, catalyzes the transfer of a dimethylallyl group onto the adenine at position 37 in tRNAs that read codons beginning with uridine, leading to the formation of N6-(dimethylallyl)adenosine (i(6)A). This chain is tRNA dimethylallyltransferase, found in Rubrobacter xylanophilus (strain DSM 9941 / JCM 11954 / NBRC 16129 / PRD-1).